The primary structure comprises 318 residues: Ribosomal RNA small subunit methyltransferase H (318 aa).

S-adenosyl-L-methionine-binding positions include 34–36 (GGH), aspartate 53, phenylalanine 82, aspartate 103, and glutamine 110.

Belongs to the methyltransferase superfamily. RsmH family.

The protein localises to the cytoplasm. It catalyses the reaction cytidine(1402) in 16S rRNA + S-adenosyl-L-methionine = N(4)-methylcytidine(1402) in 16S rRNA + S-adenosyl-L-homocysteine + H(+). Specifically methylates the N4 position of cytidine in position 1402 (C1402) of 16S rRNA. This chain is Ribosomal RNA small subunit methyltransferase H, found in Limosilactobacillus reuteri (strain DSM 20016) (Lactobacillus reuteri).